A 259-amino-acid chain; its full sequence is Hydroxyacylglutathione hydrolase (259 aa).

Positions 56, 58, 60, 61, 112, 133, and 171 each coordinate Zn(2+).

Belongs to the metallo-beta-lactamase superfamily. Glyoxalase II family. In terms of assembly, monomer. Zn(2+) serves as cofactor.

It carries out the reaction an S-(2-hydroxyacyl)glutathione + H2O = a 2-hydroxy carboxylate + glutathione + H(+). The protein operates within secondary metabolite metabolism; methylglyoxal degradation; (R)-lactate from methylglyoxal: step 2/2. In terms of biological role, thiolesterase that catalyzes the hydrolysis of S-D-lactoyl-glutathione to form glutathione and D-lactic acid. The protein is Hydroxyacylglutathione hydrolase of Pseudomonas putida (strain ATCC 47054 / DSM 6125 / CFBP 8728 / NCIMB 11950 / KT2440).